Consider the following 207-residue polypeptide: Varv peptide A/Kalata-B1 (207 aa).

Positions 1–20 are cleaved as a signal peptide; sequence MKMFIVLVLSAAFALPAAFA. Residues 21 to 66 constitute a propeptide that is removed on maturation; the sequence is TEQDVITLQAYEELLKNGAANGMTKTVISSPVLEEALVSYSKNKLG. The cyclopeptide (Gly-Asn) cross-link spans 67–95; that stretch reads GLPVCGETCVGGTCNTPGCSCSWPVCTRN. 3 disulfides stabilise this stretch: C71–C85, C75–C87, and C80–C92. The propeptide occupies 96–120; sequence SLESTKSANPLLEEALTAFAKKGLG. Residues 121–149 constitute a cross-link (cyclopeptide (Gly-Asn)); it reads GLPVCGETCVGGTCNTPGCTCSWPVCTRN. 3 cysteine pairs are disulfide-bonded: C125-C139, C129-C141, and C134-C146. Positions 150 to 174 are excised as a propeptide; the sequence is ALETQKPNHLLEEALVAFAKKGNLG. Residues 175-203 constitute a cross-link (cyclopeptide (Gly-Asn)); sequence GLPVCGETCVGGTCNTPGCSCSWPVCTRN. Cystine bridges form between C179–C193, C183–C195, and C188–C200. Positions 204–207 are excised as a propeptide; that stretch reads ALAM.

Belongs to the cyclotide family. Moebius subfamily. Post-translationally, varv peptide A and kalata-B1 are cyclic peptides.

Its function is as follows. Probably participates in a plant defense mechanism. Has hemolytic activity. The protein is Varv peptide A/Kalata-B1 of Viola odorata (Sweet violet).